Reading from the N-terminus, the 294-residue chain is Ethanolamine ammonia-lyase small subunit (294 aa).

Adenosylcob(III)alamin-binding residues include valine 207 and glutamate 228.

The protein belongs to the EutC family. As to quaternary structure, the basic unit is a heterodimer which dimerizes to form tetramers. The heterotetramers trimerize; 6 large subunits form a core ring with 6 small subunits projecting outwards. It depends on adenosylcob(III)alamin as a cofactor.

The protein localises to the bacterial microcompartment. It catalyses the reaction ethanolamine = acetaldehyde + NH4(+). Its pathway is amine and polyamine degradation; ethanolamine degradation. In terms of biological role, catalyzes the deamination of various vicinal amino-alcohols to oxo compounds. Allows this organism to utilize ethanolamine as the sole source of nitrogen and carbon in the presence of external vitamin B12. In Clostridium tetani (strain Massachusetts / E88), this protein is Ethanolamine ammonia-lyase small subunit.